Reading from the N-terminus, the 488-residue chain is L-amino oxidase (488 aa).

FAD-binding positions include 60–61 (MS), 80–81 (EA), Arg-88, and 104–107 (GPMR). Substrate-binding residues include Arg-107 and Tyr-388. Cysteines 347 and 428 form a disulfide. FAD is bound by residues Glu-474 and 481–486 (GWIDST). 481–482 (GW) provides a ligand contact to substrate.

It belongs to the flavin monoamine oxidase family. FIG1 subfamily. In terms of assembly, monomer. This is in contrast with most of its orthologs, that are non-covalently linked homodimers. Requires FAD as cofactor. Post-translationally, N-glycosylated. Expressed by the venom gland.

Its subcellular location is the secreted. The enzyme catalyses an L-alpha-amino acid + O2 + H2O = a 2-oxocarboxylate + H2O2 + NH4(+). It catalyses the reaction L-leucine + O2 + H2O = 4-methyl-2-oxopentanoate + H2O2 + NH4(+). In terms of biological role, catalyzes an oxidative deamination of predominantly hydrophobic and aromatic L-amino acids, thus producing hydrogen peroxide that may contribute to the diverse toxic effects of this enzyme. Shows activity on L-Leu. Exhibits diverse biological activities, such as hemorrhage, hemolysis, edema, antibacterial and antiparasitic activities, as well as regulation of platelet aggregation. When tested on SW480 and SW620 human colon cancer cells, shows inhibition of cell proliferation, and induction of apoptosis, which is probably a consequence of the increased caspase-3 activity and the decreased Bcl-2 expression. This is L-amino oxidase from Trimeresurus purpureomaculatus (Mangrove pit viper).